We begin with the raw amino-acid sequence, 325 residues long: Pyruvate dehydrogenase E1 component subunit beta (325 aa).

Position 59 (Glu-59) interacts with thiamine diphosphate.

As to quaternary structure, heterodimer of an alpha and a beta chain. It depends on thiamine diphosphate as a cofactor.

It carries out the reaction N(6)-[(R)-lipoyl]-L-lysyl-[protein] + pyruvate + H(+) = N(6)-[(R)-S(8)-acetyldihydrolipoyl]-L-lysyl-[protein] + CO2. In terms of biological role, the pyruvate dehydrogenase complex catalyzes the overall conversion of pyruvate to acetyl-CoA and CO(2). It contains multiple copies of three enzymatic components: pyruvate dehydrogenase (E1), dihydrolipoamide acetyltransferase (E2) and lipoamide dehydrogenase (E3). The polypeptide is Pyruvate dehydrogenase E1 component subunit beta (pdhB) (Rickettsia bellii (strain RML369-C)).